A 66-amino-acid polypeptide reads, in one-letter code: Cadmium-metallothionein (66 aa).

S1 carries the N-acetylserine modification. Residues C9, C13, C18, C20, C24, C26, C30, C32, C35, C38, C40, C45, C47, C51, C57, C59, C63, and C65 each contribute to the Cd(2+) site.

Belongs to the metallothionein superfamily. Type 2 family.

The metallothioneins are involved in the cellular sequestration of toxic metal ions and regulation of essential trace elements. Binds almost exclusively cadmium. The sequence is that of Cadmium-metallothionein from Helix pomatia (Roman snail).